Here is a 325-residue protein sequence, read N- to C-terminus: Putative 1-aminocyclopropane-1-carboxylate deaminase (325 aa).

K54 is modified (N6-(pyridoxal phosphate)lysine).

Belongs to the ACC deaminase/D-cysteine desulfhydrase family. Requires pyridoxal 5'-phosphate as cofactor.

The enzyme catalyses 1-aminocyclopropane-1-carboxylate + H2O = 2-oxobutanoate + NH4(+). This chain is Putative 1-aminocyclopropane-1-carboxylate deaminase, found in Pyrococcus horikoshii (strain ATCC 700860 / DSM 12428 / JCM 9974 / NBRC 100139 / OT-3).